The chain runs to 219 residues: Redox-sensing transcriptional repressor Rex (219 aa).

The segment at residues 18–57 is a DNA-binding region (H-T-H motif); that stretch reads LYYRFIQSLYNSGKLRVSSAELSEAVKVDSATIRRDFSYF. 92-97 contacts NAD(+); it reads GVGHLG.

The protein belongs to the transcriptional regulatory Rex family. As to quaternary structure, homodimer.

The protein localises to the cytoplasm. Functionally, modulates transcription in response to changes in cellular NADH/NAD(+) redox state. The protein is Redox-sensing transcriptional repressor Rex of Exiguobacterium sibiricum (strain DSM 17290 / CCUG 55495 / CIP 109462 / JCM 13490 / 255-15).